The sequence spans 159 residues: MIEGVMKEGFITTSYDSVVNWAKTGSLWPMTFGLACCAVEMMHAAAARYDIGRFGAEVFRASPRQSDLMIVAGTLCNKMAPALRKVYDQMSEPRWVISMGSCANGGGYYHYSYSVVRGCDRIVPVDVYVPGCPPTAEALIYGIIQLQQKIRRTHTIARV.

The [4Fe-4S] cluster site is built by Cys-36, Cys-37, Cys-102, and Cys-132.

It belongs to the complex I 20 kDa subunit family. In terms of assembly, NDH-1 is composed of 14 different subunits. Subunits NuoB, C, D, E, F, and G constitute the peripheral sector of the complex. [4Fe-4S] cluster serves as cofactor.

It is found in the cell inner membrane. The enzyme catalyses a quinone + NADH + 5 H(+)(in) = a quinol + NAD(+) + 4 H(+)(out). NDH-1 shuttles electrons from NADH, via FMN and iron-sulfur (Fe-S) centers, to quinones in the respiratory chain. Couples the redox reaction to proton translocation (for every two electrons transferred, four hydrogen ions are translocated across the cytoplasmic membrane), and thus conserves the redox energy in a proton gradient. This Paracidovorax citrulli (strain AAC00-1) (Acidovorax citrulli) protein is NADH-quinone oxidoreductase subunit B.